A 197-amino-acid polypeptide reads, in one-letter code: Glycerol-3-phosphate acyltransferase (197 aa).

Helical transmembrane passes span M1–I21, W50–A70, G77–L97, M111–L131, F136–L156, and G157–K177.

Belongs to the PlsY family. As to quaternary structure, probably interacts with PlsX.

It is found in the cell inner membrane. The catalysed reaction is an acyl phosphate + sn-glycerol 3-phosphate = a 1-acyl-sn-glycero-3-phosphate + phosphate. Its pathway is lipid metabolism; phospholipid metabolism. Functionally, catalyzes the transfer of an acyl group from acyl-phosphate (acyl-PO(4)) to glycerol-3-phosphate (G3P) to form lysophosphatidic acid (LPA). This enzyme utilizes acyl-phosphate as fatty acyl donor, but not acyl-CoA or acyl-ACP. The sequence is that of Glycerol-3-phosphate acyltransferase from Prochlorococcus marinus (strain MIT 9312).